A 153-amino-acid chain; its full sequence is Large ribosomal subunit protein bL9 (153 aa).

Belongs to the bacterial ribosomal protein bL9 family.

Binds to the 23S rRNA. This chain is Large ribosomal subunit protein bL9, found in Koribacter versatilis (strain Ellin345).